The chain runs to 306 residues: MGNLVIGSRGSELALWQANHIKERLKKECLIESEIQIVKTKGDKILDTPLNKIGGKGLFTKELEELLLKGEIDLAVHSLKDVPVVFEKGLDLACITKRADVRDTFLSVKFPDLMSLPKGAKVGTTSLRRSMQIKLKRQDLDTESLRGNVQTRLKKLECGEFDAIILAEAGLCRLEIQGAKYRKAFSVKEMIPSMGQGALGVEMLKNHKHFITLQKLNDEKSAFCCRLEREFIKGLNGGCQIPIGVHASLMGDRVKIQAVLGLPNGKEVIAKEKQGDKTKAFDLVQELLEEFLQSGAKEILEKAQLF.

The residue at position 239 (Cys239) is an S-(dipyrrolylmethanemethyl)cysteine.

This sequence belongs to the HMBS family. Monomer. The cofactor is dipyrromethane.

It catalyses the reaction 4 porphobilinogen + H2O = hydroxymethylbilane + 4 NH4(+). The protein operates within porphyrin-containing compound metabolism; protoporphyrin-IX biosynthesis; coproporphyrinogen-III from 5-aminolevulinate: step 2/4. Its function is as follows. Tetrapolymerization of the monopyrrole PBG into the hydroxymethylbilane pre-uroporphyrinogen in several discrete steps. The sequence is that of Porphobilinogen deaminase from Helicobacter pylori (strain HPAG1).